A 591-amino-acid chain; its full sequence is MTLDPTKHPDWKIALDAESRMKTVETLAAELGLEKAELLPYGHYMGKVEQQAVMQRLKDRPNGKYIDVTAITPTPLGEGKSTTTIGLVQGLARRGRRSSAAIRQPSGGPTMGMKGSAAGGGLSQCIPLTPYSLNFTGDLHAVGAAHNLGMTALTSRMQHERNYDDATLEKLSGMARLNIDPTRINTGWVMDFCVQALRNIIIGIEGDGRRNDGFMMRSHFDITVASEVMCILSIARDLRDLRERMGRMVLAHDRNGKPVTTSDLGVAGAMTAWLVEAAKPNLIQTIEGQPVFVHTGPFANIALGQSSVIADRVALKLSDYHVTESGFAAEMGYEKFWNLKCHYSGLVPDAAVVVATVRALKNHGGAPQPKPGQALPEPYTREDVGLVEAGCANLLHHLGIVRRSGVPAVVCINKFHTDTKAEVDAIRRICEQAGARVALSEHWEKGGEGALELADAVTDACNEKNEFRPLYNWNSPLTERITTIAQEVYGADGVEFEPLAAQRLKDLQERPDADELGVCMVKTQYSLSDKPALKGVPKGWRLHVRDVLFFGGAGLVAPVSGDISLMPGTGSKPAFRNIDVDVETGKVTGLF.

74–81 (TPLGEGKS) provides a ligand contact to ATP.

This sequence belongs to the formate--tetrahydrofolate ligase family.

It carries out the reaction (6S)-5,6,7,8-tetrahydrofolate + formate + ATP = (6R)-10-formyltetrahydrofolate + ADP + phosphate. It participates in one-carbon metabolism; tetrahydrofolate interconversion. This chain is Formate--tetrahydrofolate ligase, found in Desulfovibrio desulfuricans (strain ATCC 27774 / DSM 6949 / MB).